The chain runs to 310 residues: Tyrosine recombinase XerC (310 aa).

The Core-binding (CB) domain maps to 11-97; sequence NSLQKPLERF…SLRSFFDFLI (87 aa). The Tyr recombinase domain occupies 118–298; that stretch reads PLPKNLDVDE…DFQHLAQAYD (181 aa). Active-site residues include R157, K181, H250, R253, and H276. Y285 functions as the O-(3'-phospho-DNA)-tyrosine intermediate in the catalytic mechanism.

The protein belongs to the 'phage' integrase family. XerC subfamily. Forms a cyclic heterotetrameric complex composed of two molecules of XerC and two molecules of XerD.

It localises to the cytoplasm. Its function is as follows. Site-specific tyrosine recombinase, which acts by catalyzing the cutting and rejoining of the recombining DNA molecules. The XerC-XerD complex is essential to convert dimers of the bacterial chromosome into monomers to permit their segregation at cell division. It also contributes to the segregational stability of plasmids. This is Tyrosine recombinase XerC from Vibrio parahaemolyticus serotype O3:K6 (strain RIMD 2210633).